The primary structure comprises 443 residues: Ribitol-5-phosphate xylosyltransferase 1 (443 aa).

The Cytoplasmic segment spans residues 1-9 (MRLTRKRLC). Residues 10-30 (SFLIALYCLFSLYAAYHVFFG) form a helical; Signal-anchor for type II membrane protein membrane-spanning segment. The Extracellular portion of the chain corresponds to 31 to 443 (RRRQAPAGSP…ESSFLMNNKS (413 aa)). The tract at residues 35–76 (APAGSPRGLRKGAAPARERRGREQSTLESEEWNPWEGDEKNE) is disordered. Over residues 50-59 (ARERRGREQS) the composition is skewed to basic and acidic residues.

This sequence belongs to the RXYLT1 family. Forms a complex composed of FKTN/fukutin, FKRP and RXYLT1/TMEM5.

It is found in the golgi apparatus membrane. The enzyme catalyses 3-O-[Rib-ol-P-Rib-ol-P-3-beta-D-GalNAc-(1-&gt;3)-beta-D-GlcNAc-(1-&gt;4)-(O-6-P-alpha-D-Man)]-Thr-[protein] + UDP-alpha-D-xylose = 3-O-[beta-D-Xyl-(1-&gt;4)-Rib-ol-P-Rib-ol-P-3-beta-D-GalNAc-(1-&gt;3)-beta-D-GlcNAc-(1-&gt;4)-(O-6-P-alpha-D-Man)]-Thr-[protein] + UDP + H(+). The protein operates within protein modification; protein glycosylation. Its function is as follows. Acts as a UDP-D-xylose:ribitol-5-phosphate beta1,4-xylosyltransferase, which catalyzes the transfer of UDP-D-xylose to ribitol 5-phosphate (Rbo5P) to form the Xylbeta1-4Rbo5P linkage on O-mannosyl glycan. Participates in the biosynthesis of the phosphorylated O-mannosyl trisaccharide (N-acetylgalactosamine-beta-3-N-acetylglucosamine-beta-4-(phosphate-6-)mannose), a carbohydrate structure present in alpha-dystroglycan (DAG1), which is required for binding laminin G-like domain-containing extracellular proteins with high affinity. This is Ribitol-5-phosphate xylosyltransferase 1 from Homo sapiens (Human).